The primary structure comprises 353 residues: Peroxidase 34 (353 aa).

Positions 1 to 30 are cleaved as a signal peptide; the sequence is MHFSSSSTSSTWTILITLGCLMLHASLSAA. Glutamine 31 bears the Pyrrolidone carboxylic acid mark. Intrachain disulfides connect cysteine 41–cysteine 121, cysteine 74–cysteine 79, cysteine 127–cysteine 331, and cysteine 207–cysteine 239. N-linked (GlcNAc...) asparagine glycosylation occurs at asparagine 43. The Proton acceptor role is filled by histidine 72. The Ca(2+) site is built by aspartate 73, valine 76, glycine 78, aspartate 80, and serine 82. Residue asparagine 87 is glycosylated (N-linked (GlcNAc...) asparagine). Proline 169 lines the substrate pocket. Heme b is bound at residue histidine 200. Position 201 (threonine 201) interacts with Ca(2+). N-linked (GlcNAc...) asparagine glycans are attached at residues asparagine 216, asparagine 228, and asparagine 244. Ca(2+) is bound by residues aspartate 252, threonine 255, and aspartate 260. Asparagine 285 is a glycosylation site (N-linked (GlcNAc...) asparagine).

The protein belongs to the peroxidase family. Classical plant (class III) peroxidase subfamily. It depends on heme b as a cofactor. Ca(2+) serves as cofactor. Preferentially expressed in roots, but also detected in flowers, leaves and stems.

The protein resides in the secreted. It localises to the vacuole. The catalysed reaction is 2 a phenolic donor + H2O2 = 2 a phenolic radical donor + 2 H2O. Functionally, removal of H(2)O(2), oxidation of toxic reductants, biosynthesis and degradation of lignin, suberization, auxin catabolism, response to environmental stresses such as wounding, pathogen attack and oxidative stress. These functions might be dependent on each isozyme/isoform in each plant tissue. In terms of biological role, may be implicated in the systemic acquired resistance response via the salicylic acid signal transduction pathway. Exhibits a Ca(2+)-pectate binding affinity which could be interpreted in vivo as a specificity to interact with the pectic structure of the cell wall. The polypeptide is Peroxidase 34 (PER34) (Arabidopsis thaliana (Mouse-ear cress)).